Consider the following 333-residue polypeptide: Nucleoid-associated protein VV1_3120 (333 aa).

Belongs to the YejK family.

It localises to the cytoplasm. It is found in the nucleoid. This is Nucleoid-associated protein VV1_3120 from Vibrio vulnificus (strain CMCP6).